The sequence spans 232 residues: RNA chaperone ProQ (232 aa).

The tract at residues 105–182 (EAKARVQAQR…REEQHTPVSD (78 aa)) is disordered. Over residues 117–136 (QQAKKREAAAAAGEKEDAPR) the composition is skewed to basic and acidic residues. A compositionally biased stretch (basic residues) spans 137–146 (RERKPRPTTP). A compositionally biased stretch (basic and acidic residues) spans 147–177 (RRKEGAERKPRAQKPVEKAPKTVKAPREEQH).

The protein belongs to the ProQ family.

It is found in the cytoplasm. Its function is as follows. RNA chaperone with significant RNA binding, RNA strand exchange and RNA duplexing activities. May regulate ProP activity through an RNA-based, post-transcriptional mechanism. The sequence is that of RNA chaperone ProQ from Escherichia coli (strain ATCC 8739 / DSM 1576 / NBRC 3972 / NCIMB 8545 / WDCM 00012 / Crooks).